The primary structure comprises 509 residues: MGCVCSSNPEDDWMENIDVCENCHYPIVPLDSKSTLPIRTGSEVRDPLVTYEGSLPPASPLQDNLVIALHSYEPSHDGDLGFEKGEQLRILEQSGEWWKAQSLTTGQEGFIPFNFVAKANSLEPEPWFFKNLSRKDAERQLLAPGNTHGSFLIRESESTAGSFSLSVRDFDQNQGEVVKHYKIRNLDNGGFYISPRITFPGLHDLVRHYTNASDGLCTKLSRPCQTQKPQKPWWEDEWEVPRETLKLVERLGAGQFGEVWMGYYNGHTKVAVKSLKQGSMSPDAFLAEANLMKQLQHPRLVRLYAVVTQEPIYIITEYMENGSLVDFLKTPSGIKLNVNKLLDMAAQIAEGMAFIEEQNYIHRDLRAANILVSDTLSCKIADFGLARLIEDNEYTAREGAKFPIKWTAPEAINYGTFTIKSDVWSFGILLTEIVTHGRIPYPGMTNPEVIQNLEKGYRMVRPDNCPEELYHLMMLCWKERPEDRPTFDYLRSVLDDFFTATEGQYQPQP.

A lipid anchor (N-myristoyl glycine) is attached at glycine 2. The tract at residues 2 to 72 (GCVCSSNPED…DNLVIALHSY (71 aa)) is interactions with CD4 and CD8. Residues cysteine 3 and cysteine 5 are each lipidated (S-palmitoyl cysteine). Positions 61–121 (LQDNLVIALH…PFNFVAKANS (61 aa)) constitute an SH3 domain. Lysine 99 is covalently cross-linked (Glycyl lysine isopeptide (Lys-Gly) (interchain with G-Cter in ubiquitin)). Residue serine 102 is modified to Phosphoserine. Residues 127–224 (WFFKNLSRKD…GLCTKLSRPC (98 aa)) form the SH2 domain. Residues 154–242 (RESESTAGSF…WWEDEWEVPR (89 aa)) form an interaction with PTPRH region. The residue at position 159 (threonine 159) is a Phosphothreonine. At serine 162 the chain carries Phosphoserine. Phosphotyrosine is present on tyrosine 192. The residue at position 194 (serine 194) is a Phosphoserine. Positions 245–498 (LKLVERLGAG…YLRSVLDDFF (254 aa)) constitute a Protein kinase domain. Residues 251–259 (LGAGQFGEV) and lysine 273 each bind ATP. Lysine 276 participates in a covalent cross-link: Glycyl lysine isopeptide (Lys-Gly) (interchain with G-Cter in ubiquitin). Aspartate 364 functions as the Proton acceptor in the catalytic mechanism. A Phosphotyrosine; by autocatalysis modification is found at tyrosine 394. Tyrosine 505 bears the Phosphotyrosine mark.

This sequence belongs to the protein kinase superfamily. Tyr protein kinase family. SRC subfamily. In terms of assembly, binds to the cytoplasmic domain of cell surface receptors, such as AXL, CD2, CD4, CD5, CD8, CD44, CD45 and CD122. Also binds to effector molecules, such as PI4K, VAV1, RASA1, FYB1 and to other protein kinases including CDK1, RAF1, ZAP70 and SYK. Binds to phosphatidylinositol 3'-kinase (PI3K) from T-lymphocytes through its SH3 domain and to the tyrosine phosphorylated form of KHDRBS1/p70 through its SH2 domain. Interacts with SQSTM1. Interacts with phosphorylated LIME1. Interacts with CBLB and PTPRH. Interacts with RUNX3. Forms a signaling complex with EPHA1, PTK2B and PI3-KINASE; upon activation by EFNA1 which may regulate T-lymphocytes migration. Associates with ZAP70 and RHOH; these interactions allow LCK-mediated RHOH and CD3 subunit phosphorylations in presence of a functional ZAP70. Interacts with CEACAM1 (via cytoplasmic domain); mediates CEACAM1 phosphorylation resulting in PTPN6 recruitment that dephosphorylates TCR stimulation-induced CD247 and ZAP70. Interacts with FYB2. Interacts with CD160. Interacts with CD48. In terms of processing, autophosphorylated on Tyr-394, increasing enzymatic activity, this site is dephosphorylated by PTN22. Phosphorylated on Tyr-505 by CSK, decreasing activity. Dephosphorylated by PTPRC/CD45. Dephosphorylation at Tyr-394 by PTPN2 negatively regulates T-cells differentiation. Dephosphorylation at Tyr-394 by DUSP22 negatively regulates T-cell receptor signaling. Myristoylation is required prior to palmitoylation. Post-translationally, palmitoylation regulates association with the plasma membrane and could be mediated by ZDHHC2. In terms of processing, 'Lys-63'-linked ubiquitinated at Lys-99 and Lys-276 by UBR2; this modification is required for autophosphorylation at Tyr-394.

Its subcellular location is the cell membrane. The protein resides in the cytoplasm. It localises to the cytosol. The enzyme catalyses L-tyrosyl-[protein] + ATP = O-phospho-L-tyrosyl-[protein] + ADP + H(+). With respect to regulation, the relative activities of the inhibitory tyrosine-protein kinase CSK and the activating tyrosine-protein phosphatase PTPRC/CD45 determine the level of LCK activity. These interactions allow rapid and efficient activation of LCK in response to TCR stimulation. In terms of biological role, non-receptor tyrosine-protein kinase that plays an essential role in the selection and maturation of developing T-cells in the thymus and in the function of mature T-cells. Plays a key role in T-cell antigen receptor (TCR)-linked signal transduction pathways. Constitutively associated with the cytoplasmic portions of the CD4 and CD8 surface receptors. Association of the TCR with a peptide antigen-bound MHC complex facilitates the interaction of CD4 and CD8 with MHC class II and class I molecules, respectively, thereby recruiting the associated LCK protein to the vicinity of the TCR/CD3 complex. LCK then phosphorylates tyrosine residues within the immunoreceptor tyrosine-based activation motifs (ITAM) of the cytoplasmic tails of the TCR-gamma chains and CD3 subunits, initiating the TCR/CD3 signaling pathway. Once stimulated, the TCR recruits the tyrosine kinase ZAP70, that becomes phosphorylated and activated by LCK. Following this, a large number of signaling molecules are recruited, ultimately leading to lymphokine production. LCK also contributes to signaling by other receptor molecules. Associates directly with the cytoplasmic tail of CD2, which leads to hyperphosphorylation and activation of LCK. Also plays a role in the IL2 receptor-linked signaling pathway that controls the T-cell proliferative response. Binding of IL2 to its receptor results in increased activity of LCK. Is expressed at all stages of thymocyte development and is required for the regulation of maturation events that are governed by both pre-TCR and mature alpha beta TCR. Phosphorylates other substrates including RUNX3, PTK2B/PYK2, the microtubule-associated protein MAPT, RHOH or TYROBP. Interacts with UNC119; this interaction plays a crucial role in activation of LCK. The sequence is that of Proto-oncogene tyrosine-protein kinase LCK (Lck) from Rattus norvegicus (Rat).